A 184-amino-acid polypeptide reads, in one-letter code: Phosphorelay intermediate protein YPD1 (184 aa).

The HPt domain maps to 30 to 125 (EEGFSKSLVE…SAENVAVNDG (96 aa)). At H69 the chain carries Phosphohistidine. The disordered stretch occupies residues 120–152 (VAVNDGETNPENGSNGNETSNNKTNTSNIPDES). The segment covering 125-147 (GETNPENGSNGNETSNNKTNTSN) has biased composition (low complexity).

Belongs to the YPD1 family.

It is found in the cytoplasm. It localises to the nucleus. Functionally, phosphorelay intermediate protein that is part of the bifurcated SLN1-YPD1-SKN7/SSK1 two-component regulatory system, which controls activity of the HOG1 pathway and gene expression in response to oxidative stress and probably to changes in the osmolarity of the extracellular environment. Catalyzes the phosphoryl group transfer from the membrane-bound histidine kinase SLN1 to two distinct response regulators SSK1 and SKN7. This Candida albicans (strain SC5314 / ATCC MYA-2876) (Yeast) protein is Phosphorelay intermediate protein YPD1 (YPD1).